A 64-amino-acid chain; its full sequence is Prokaryotic ubiquitin-like protein Pup (64 aa).

The disordered stretch occupies residues 1 to 37; that stretch reads MAQEQTKRGGGGGDDDDIAGSTAAGQERREKLTEETD. Positions 21 to 58 are ARC ATPase binding; the sequence is STAAGQERREKLTEETDDLLDEIDDVLEENAEDFVRAY. Residues 23-52 are a coiled coil; it reads AAGQERREKLTEETDDLLDEIDDVLEENAE. The residue at position 64 (glutamine 64) is a Deamidated glutamine. An Isoglutamyl lysine isopeptide (Gln-Lys) (interchain with K-? in acceptor proteins) cross-link involves residue glutamine 64.

This sequence belongs to the prokaryotic ubiquitin-like protein family. As to quaternary structure, strongly interacts with the proteasome-associated ATPase ARC through a hydrophobic interface; the interacting region of Pup lies in its C-terminal half. There is one Pup binding site per ARC hexamer ring. Post-translationally, is modified by deamidation of its C-terminal glutamine to glutamate by the deamidase Dop, a prerequisite to the subsequent pupylation process.

The protein operates within protein degradation; proteasomal Pup-dependent pathway. Protein modifier that is covalently attached to lysine residues of substrate proteins, thereby targeting them for proteasomal degradation. The tagging system is termed pupylation. This is Prokaryotic ubiquitin-like protein Pup from Mycobacterium tuberculosis (strain ATCC 25177 / H37Ra).